A 414-amino-acid polypeptide reads, in one-letter code: Esterase FrsA (414 aa).

This sequence belongs to the FrsA family.

The catalysed reaction is a carboxylic ester + H2O = an alcohol + a carboxylate + H(+). Functionally, catalyzes the hydrolysis of esters. This is Esterase FrsA from Escherichia fergusonii (strain ATCC 35469 / DSM 13698 / CCUG 18766 / IAM 14443 / JCM 21226 / LMG 7866 / NBRC 102419 / NCTC 12128 / CDC 0568-73).